The following is a 227-amino-acid chain: Enolase-phosphatase E1 (227 aa).

The Mg(2+) site is built by Asp-11 and Glu-13. Substrate contacts are provided by residues 118 to 119 (SS) and Lys-161. Asp-186 provides a ligand contact to Mg(2+).

Belongs to the HAD-like hydrolase superfamily. MasA/MtnC family. Monomer. The cofactor is Mg(2+).

Its subcellular location is the cytoplasm. It is found in the nucleus. The catalysed reaction is 5-methylsulfanyl-2,3-dioxopentyl phosphate + H2O = 1,2-dihydroxy-5-(methylsulfanyl)pent-1-en-3-one + phosphate. The protein operates within amino-acid biosynthesis; L-methionine biosynthesis via salvage pathway; L-methionine from S-methyl-5-thio-alpha-D-ribose 1-phosphate: step 3/6. It participates in amino-acid biosynthesis; L-methionine biosynthesis via salvage pathway; L-methionine from S-methyl-5-thio-alpha-D-ribose 1-phosphate: step 4/6. Its function is as follows. Bifunctional enzyme that catalyzes the enolization of 2,3-diketo-5-methylthiopentyl-1-phosphate (DK-MTP-1-P) into the intermediate 2-hydroxy-3-keto-5-methylthiopentenyl-1-phosphate (HK-MTPenyl-1-P), which is then dephosphorylated to form the acireductone 1,2-dihydroxy-3-keto-5-methylthiopentene (DHK-MTPene). This chain is Enolase-phosphatase E1, found in Saccharomyces cerevisiae (strain ATCC 204508 / S288c) (Baker's yeast).